Consider the following 155-residue polypeptide: Putative pre-16S rRNA nuclease (155 aa).

This sequence belongs to the YqgF nuclease family.

It localises to the cytoplasm. Its function is as follows. Could be a nuclease involved in processing of the 5'-end of pre-16S rRNA. The protein is Putative pre-16S rRNA nuclease of Xanthomonas oryzae pv. oryzae (strain MAFF 311018).